A 278-amino-acid chain; its full sequence is Phage-like element PBSX protein XkdB (278 aa).

The segment at residues 58–80 (LKAREMAAVFGVSEKTVRRWLEL) is a DNA-binding region (H-T-H motif). Disordered stretches follow at residues 117-136 (SLKERPFSPQTPDTNDRTDI) and 239-278 (QHERMKKHDKTNNRTDFGRAEKRETSITGGQTGRIRRKQV). The segment covering 248–263 (KTNNRTDFGRAEKRET) has biased composition (basic and acidic residues).

This sequence to B.subtilis YqaL.

The sequence is that of Phage-like element PBSX protein XkdB (xkdB) from Bacillus subtilis (strain 168).